Reading from the N-terminus, the 391-residue chain is Putative B3 domain-containing protein Os08g0325100 (391 aa).

The segment at residues 32 to 125 (GDFQHEIRGE…QFDVIIFDQV (94 aa)) is a DNA-binding region (TF-B3). The segment at 143–232 (VQEGRTDATE…SSRAHPQPMP (90 aa)) is disordered. The segment covering 172–226 (EGRTNATETLNSSRAHSQPMPMQTPATETLNSSRAHSQDMPMQSPATETLNSSRA) has biased composition (polar residues).

It localises to the nucleus. This chain is Putative B3 domain-containing protein Os08g0325100, found in Oryza sativa subsp. japonica (Rice).